The chain runs to 397 residues: 1-deoxy-D-xylulose 5-phosphate reductoisomerase (397 aa).

The NADPH site is built by T10, G11, S12, I13, Q38, and N123. Position 124 (K124) interacts with 1-deoxy-D-xylulose 5-phosphate. NADPH is bound at residue E125. D149 lines the Mn(2+) pocket. Positions 150, 151, 185, and 208 each coordinate 1-deoxy-D-xylulose 5-phosphate. E151 serves as a coordination point for Mn(2+). G214 provides a ligand contact to NADPH. Residues S221, N226, K227, and E230 each contribute to the 1-deoxy-D-xylulose 5-phosphate site. E230 contacts Mn(2+).

This sequence belongs to the DXR family. Requires Mg(2+) as cofactor. Mn(2+) is required as a cofactor.

It catalyses the reaction 2-C-methyl-D-erythritol 4-phosphate + NADP(+) = 1-deoxy-D-xylulose 5-phosphate + NADPH + H(+). It functions in the pathway isoprenoid biosynthesis; isopentenyl diphosphate biosynthesis via DXP pathway; isopentenyl diphosphate from 1-deoxy-D-xylulose 5-phosphate: step 1/6. Catalyzes the NADPH-dependent rearrangement and reduction of 1-deoxy-D-xylulose-5-phosphate (DXP) to 2-C-methyl-D-erythritol 4-phosphate (MEP). The protein is 1-deoxy-D-xylulose 5-phosphate reductoisomerase of Idiomarina loihiensis (strain ATCC BAA-735 / DSM 15497 / L2-TR).